Reading from the N-terminus, the 146-residue chain is Ribosome-binding factor A (146 aa).

The disordered stretch occupies residues 121–146; the sequence is KQQQFGSADDVTENDIDEADDTEGKA. The segment covering 130–146 has biased composition (acidic residues); the sequence is DVTENDIDEADDTEGKA.

The protein belongs to the RbfA family. Monomer. Binds 30S ribosomal subunits, but not 50S ribosomal subunits or 70S ribosomes.

The protein resides in the cytoplasm. One of several proteins that assist in the late maturation steps of the functional core of the 30S ribosomal subunit. Associates with free 30S ribosomal subunits (but not with 30S subunits that are part of 70S ribosomes or polysomes). Required for efficient processing of 16S rRNA. May interact with the 5'-terminal helix region of 16S rRNA. The polypeptide is Ribosome-binding factor A (Shewanella sp. (strain MR-4)).